Reading from the N-terminus, the 395-residue chain is Flap endonuclease 1 (395 aa).

Residues 1–104 form an N-domain region; it reads MGIKQLFQII…GELAKRFQRK (104 aa). Mg(2+) is bound at residue Asp34. DNA-binding residues include Arg47 and Arg70. 5 residues coordinate Mg(2+): Asp86, Glu158, Glu160, Asp179, and Asp181. The segment at 122 to 253 is I-domain; sequence DIEKFSRRTV…TTALKLIRDH (132 aa). Glu158 is a binding site for DNA. Gly231 and Asp233 together coordinate DNA. Residue Asp233 participates in Mg(2+) binding. The interaction with PCNA stretch occupies residues 341-349; that stretch reads QQARLEGFF. The segment at 344-395 is disordered; the sequence is RLEGFFKPVPKTDAQKAAHKRKLEEKNEEKKKKLKQEKKDKAAAKSKPRGAA. Residues 365–386 show a composition bias toward basic and acidic residues; that stretch reads KLEEKNEEKKKKLKQEKKDKAA.

It belongs to the XPG/RAD2 endonuclease family. FEN1 subfamily. Interacts with PCNA. Three molecules of FEN1 bind to one PCNA trimer with each molecule binding to one PCNA monomer. PCNA stimulates the nuclease activity without altering cleavage specificity. Requires Mg(2+) as cofactor. In terms of processing, phosphorylated. Phosphorylation upon DNA damage induces relocalization to the nuclear plasma.

Its subcellular location is the nucleus. It localises to the nucleolus. The protein resides in the nucleoplasm. It is found in the mitochondrion. Functionally, structure-specific nuclease with 5'-flap endonuclease and 5'-3' exonuclease activities involved in DNA replication and repair. During DNA replication, cleaves the 5'-overhanging flap structure that is generated by displacement synthesis when DNA polymerase encounters the 5'-end of a downstream Okazaki fragment. It enters the flap from the 5'-end and then tracks to cleave the flap base, leaving a nick for ligation. Also involved in the long patch base excision repair (LP-BER) pathway, by cleaving within the apurinic/apyrimidinic (AP) site-terminated flap. Acts as a genome stabilization factor that prevents flaps from equilibrating into structures that lead to duplications and deletions. Also possesses 5'-3' exonuclease activity on nicked or gapped double-stranded DNA, and exhibits RNase H activity. Also involved in replication and repair of rDNA and in repairing mitochondrial DNA. This chain is Flap endonuclease 1, found in Fusarium vanettenii (strain ATCC MYA-4622 / CBS 123669 / FGSC 9596 / NRRL 45880 / 77-13-4) (Fusarium solani subsp. pisi).